We begin with the raw amino-acid sequence, 183 residues long: Erythropoietin (183 aa).

Residues 1–23 form the signal peptide; the sequence is MFHGSGLFALLLMVLEWTRPGLS. 2 disulfide bridges follow: Cys-30–Cys-178 and Cys-52–Cys-56. Asn-61 and Asn-104 each carry an N-linked (GlcNAc...) asparagine glycan.

It belongs to the EPO/TPO family. Post-translationally, N-glycosylated. Expressed in heart and liver.

Its subcellular location is the secreted. In terms of biological role, erythropoietin is the principal hormone involved in the regulation of erythrocyte differentiation and the maintenance of a physiological level of circulating erythrocyte mass. This is Erythropoietin (epo) from Danio rerio (Zebrafish).